The following is a 305-amino-acid chain: Dihydroorotate dehydrogenase B (NAD(+)), catalytic subunit (305 aa).

FMN is bound by residues Ser21 and 45 to 46; that span reads KA. Residues Lys45 and 69–73 each bind substrate; that span reads NAIGL. The FMN site is built by Asn99 and Asn127. Asn127 is a substrate binding site. Cys130 acts as the Nucleophile in catalysis. The FMN site is built by Lys165 and Ile191. Position 192-193 (192-193) interacts with substrate; that stretch reads NT. Residues Gly217, 243 to 244, and 265 to 266 contribute to the FMN site; these read GG and GT.

The protein belongs to the dihydroorotate dehydrogenase family. Type 1 subfamily. In terms of assembly, heterotetramer of 2 PyrK and 2 PyrD type B subunits. The cofactor is FMN.

Its subcellular location is the cytoplasm. It carries out the reaction (S)-dihydroorotate + NAD(+) = orotate + NADH + H(+). It functions in the pathway pyrimidine metabolism; UMP biosynthesis via de novo pathway; orotate from (S)-dihydroorotate (NAD(+) route): step 1/1. Catalyzes the conversion of dihydroorotate to orotate with NAD(+) as electron acceptor. The protein is Dihydroorotate dehydrogenase B (NAD(+)), catalytic subunit (pyrD) of Halalkalibacterium halodurans (strain ATCC BAA-125 / DSM 18197 / FERM 7344 / JCM 9153 / C-125) (Bacillus halodurans).